Consider the following 294-residue polypeptide: 33 kDa chaperonin (294 aa).

Intrachain disulfides connect cysteine 239/cysteine 241 and cysteine 272/cysteine 275.

It belongs to the HSP33 family. Post-translationally, under oxidizing conditions two disulfide bonds are formed involving the reactive cysteines. Under reducing conditions zinc is bound to the reactive cysteines and the protein is inactive.

The protein localises to the cytoplasm. Functionally, redox regulated molecular chaperone. Protects both thermally unfolding and oxidatively damaged proteins from irreversible aggregation. Plays an important role in the bacterial defense system toward oxidative stress. The protein is 33 kDa chaperonin of Listeria monocytogenes serotype 4b (strain CLIP80459).